A 120-amino-acid polypeptide reads, in one-letter code: Large ribosomal subunit protein bL20 (120 aa).

It belongs to the bacterial ribosomal protein bL20 family.

Functionally, binds directly to 23S ribosomal RNA and is necessary for the in vitro assembly process of the 50S ribosomal subunit. It is not involved in the protein synthesizing functions of that subunit. This Methylobacillus flagellatus (strain ATCC 51484 / DSM 6875 / VKM B-1610 / KT) protein is Large ribosomal subunit protein bL20.